A 446-amino-acid chain; its full sequence is Serine--tRNA ligase, mitochondrial (446 aa).

Residue 251-253 coordinates L-serine; that stretch reads TAE. Residues 284–286 and V300 contribute to the ATP site; that span reads RAE. An L-serine-binding site is contributed by E307. ATP is bound at residue 371 to 374; the sequence is EISS. T407 contacts L-serine.

The protein belongs to the class-II aminoacyl-tRNA synthetase family. Type-1 seryl-tRNA synthetase subfamily. In terms of assembly, homodimer. The tRNA molecule binds across the dimer.

The protein resides in the mitochondrion matrix. The catalysed reaction is tRNA(Ser) + L-serine + ATP = L-seryl-tRNA(Ser) + AMP + diphosphate + H(+). In terms of biological role, catalyzes the attachment of serine to tRNA(Ser). The polypeptide is Serine--tRNA ligase, mitochondrial (DIA4) (Saccharomyces cerevisiae (strain ATCC 204508 / S288c) (Baker's yeast)).